Reading from the N-terminus, the 878-residue chain is Alanine--tRNA ligase (878 aa).

Zn(2+)-binding residues include histidine 564, histidine 568, cysteine 665, and histidine 669.

Belongs to the class-II aminoacyl-tRNA synthetase family. It depends on Zn(2+) as a cofactor.

It localises to the cytoplasm. It carries out the reaction tRNA(Ala) + L-alanine + ATP = L-alanyl-tRNA(Ala) + AMP + diphosphate. Functionally, catalyzes the attachment of alanine to tRNA(Ala) in a two-step reaction: alanine is first activated by ATP to form Ala-AMP and then transferred to the acceptor end of tRNA(Ala). Also edits incorrectly charged Ser-tRNA(Ala) and Gly-tRNA(Ala) via its editing domain. The sequence is that of Alanine--tRNA ligase from Natranaerobius thermophilus (strain ATCC BAA-1301 / DSM 18059 / JW/NM-WN-LF).